Consider the following 1056-residue polypeptide: E3 SUMO-protein ligase ZNF451 (1056 aa).

The disordered stretch occupies residues 1-39 (MGDPGPEIIESVPPAGPEASESTTDENEDDIQFVSEGPL). Residues 1–246 (MGDPGPEIIE…AADGHSNSLL (246 aa)) form a sufficient for E3 SUMO-protein ligase activity region. Residues 1-344 (MGDPGPEIIE…RVRCQNAGPV (344 aa)) are important for interaction with SUMO1 and SUMO2. Residues 30–37 (DIQFVSEG) are interaction with SUMO2 1. The PLRP signature appears at 38–41 (PLRP). The segment at 42-50 (VLEYIDLVS) is interaction with SUMO2 2. Residues K75, K77, K106, K139, and K153 each participate in a glycyl lysine isopeptide (Lys-Gly) (interchain with G-Cter in SUMO2) cross-link. S155 carries the phosphoserine modification. Position 158 is an omega-N-methylarginine (R158). K167 participates in a covalent cross-link: Glycyl lysine isopeptide (Lys-Gly) (interchain with G-Cter in SUMO2). Residues 168–521 (PILCPIMHCN…HMSRFHGGAH (354 aa)) form an important for interaction with SMAD4 region. The segment at 169–195 (ILCPIMHCNKEFDNGHLLLGHLKRFDH) adopts a C2H2-type 1 zinc-finger fold. The segment at 212 to 234 (FACAVCYEHFVTQQQYKDHLLSR) adopts a C2H2-type 2; degenerate zinc-finger fold. The C2H2-type 3 zinc finger occupies 253–277 (YACPQCFLLFSTKDECLKHMSTKNH). Residues K270, K275, K283, K288, K301, and K309 each participate in a glycyl lysine isopeptide (Lys-Gly) (interchain with G-Cter in SUMO2) cross-link. The C2H2-type 4; atypical zinc-finger motif lies at 315–338 (VKCVACHQTLRSHMELTAHFRVRC). The C2H2-type 5 zinc finger occupies 362–385 (GYCSDCNQVFMDVASTQSHKNSGH). K420 participates in a covalent cross-link: Glycyl lysine isopeptide (Lys-Gly) (interchain with G-Cter in SUMO2). S429 carries the post-translational modification Phosphoserine. Residue K431 forms a Glycyl lysine isopeptide (Lys-Gly) (interchain with G-Cter in SUMO2) linkage. 2 consecutive C2H2-type zinc fingers follow at residues 494 to 517 (YKCVVCGKVCEDSGVMRLHMSRFH) and 527 to 550 (FWCRTCKKELVKKDAIMAHITEFH). Residues K539 and K583 each participate in a glycyl lysine isopeptide (Lys-Gly) (interchain with G-Cter in SUMO2) cross-link. A C2H2-type 8; atypical zinc finger spans residues 604–629 (WQCRICEDMFESQECVKQHCMSLTSH). 2 consecutive C2H2-type zinc fingers follow at residues 634–657 (YSCAHCRKTFHKVETLYRHCQDEH) and 665–688 (YFCGLCDLIFNKEEEFLSHYKEHH). Residue K645 forms a Glycyl lysine isopeptide (Lys-Gly) (interchain with G-Cter in SUMO2) linkage. A Glycyl lysine isopeptide (Lys-Gly) (interchain with G-Cter in SUMO1); alternate cross-link involves residue K704. K704 is covalently cross-linked (Glycyl lysine isopeptide (Lys-Gly) (interchain with G-Cter in SUMO2); alternate). Residues K729 and K746 each participate in a glycyl lysine isopeptide (Lys-Gly) (interchain with G-Cter in SUMO2) cross-link. 2 consecutive C2H2-type zinc fingers follow at residues 751 to 774 (FRCSSCSATAQNVTDINTHVCQVH) and 787 to 810 (IKCGICTKAFQNTESAQQHFHRKH). Residues K788, K815, K843, K849, K947, K988, and K989 each participate in a glycyl lysine isopeptide (Lys-Gly) (interchain with G-Cter in SUMO2) cross-link. 2 disordered regions span residues 806 to 830 (FHRKHAALQKPTATPGGANRSSTCQ) and 839 to 858 (EKNLKQPSSQKHSDVEKGAE). Residues 849 to 858 (KHSDVEKGAE) show a composition bias toward basic and acidic residues. The disordered stretch occupies residues 1019–1045 (KECDSDDSSGMKGSPAEELRATEDVEL). Over residues 1033–1045 (PAEELRATEDVEL) the composition is skewed to basic and acidic residues. Positions 1045 to 1056 (LEEAIRRSLEEM) are important for ubiquitin binding.

It belongs to the krueppel C2H2-type zinc-finger protein family. Homooligomer. Interacts (via N-terminal region) with SUMO1. Interacts (via N-terminal region) with SUMO2. Interacts simultaneously with two SUMO2 chains. Identified in a complex with SUMO2 and UBE2I/UBC9, where one ZNF451 interacts with one UBE2I/UBC9 and two SUMO2 chains, one bound to the UBE2I/UBC9 active site and the other to another region of the same UBE2I/UBC9 molecule. Interacts (via C-terminus) with ubiquitin. Interacts (via N-terminal zinc-finger domains) with SMAD4 (via MH2 domain). Interacts with SMAD2 and SMAD3. Identified in a complex that contains at least ZNF451, SMAD2, SMAD3 and SMAD4. Interacts with EP300. Inhibits interaction between EP300 and the SMAD4 complex. Interacts with SIMC1. In terms of processing, sumoylated. Predominantly sumoylated on the N-terminal region that is important for interaction with SUMO1 and SUMO2. Sumoylation is important for localization in nuclear granules; desumoylation leads to diffuse nucleoplasmic location. Autosumoylated (in vitro). Sumoylation enhances E3 SUMO-protein ligase activity.

The protein resides in the nucleus. It localises to the PML body. The protein localises to the nucleoplasm. It participates in protein modification; protein sumoylation. E3 SUMO-protein ligase; has a preference for SUMO2 and SUMO3 and facilitates UBE2I/UBC9-mediated sumoylation of target proteins. Plays a role in protein SUMO2 modification in response to stress caused by DNA damage and by proteasome inhibitors (in vitro). Required for MCM4 sumoylation. Has no activity with SUMO1. Preferentially transfers an additional SUMO2 chain onto the SUMO2 consensus site 'Lys-11'. Negatively regulates transcriptional activation mediated by the SMAD4 complex in response to TGF-beta signaling. Inhibits EP300-mediated acetylation of histone H3 at 'Lys-9'. Plays a role in regulating the transcription of AR targets. The protein is E3 SUMO-protein ligase ZNF451 (Znf451) of Mus musculus (Mouse).